A 238-amino-acid chain; its full sequence is Probable transglycosylase IsaA (238 aa).

An N-terminal signal peptide occupies residues 1–29 (MKKTVIASSLAVALGVTGYALTTDNSAHA). Residues 115-157 (ASTQSVSSNQQSSNTNVEAVSAPKTTSYSASTSSSSSASTGGS) are disordered. Composition is skewed to low complexity over residues 116–131 (STQSVSSNQQSSNTNV) and 139–157 (TTSYSASTSSSSSASTGGS).

Belongs to the transglycosylase family. IsaA subfamily.

Its subcellular location is the secreted. Its function is as follows. Is able to cleave peptidoglycan. The sequence is that of Probable transglycosylase IsaA (isaA) from Staphylococcus haemolyticus (strain JCSC1435).